Here is a 322-residue protein sequence, read N- to C-terminus: Nitrilase (322 aa).

Residues 5 to 283 (VRVGAVQSEP…EAILTADIDL (279 aa)) form the CN hydrolase domain. Catalysis depends on Glu45, which acts as the Proton acceptor. Lys127 is a catalytic residue. Cys162 functions as the Nucleophile in the catalytic mechanism.

Belongs to the carbon-nitrogen hydrolase superfamily. Nitrilase family.

It carries out the reaction a nitrile + 2 H2O = a carboxylate + NH4(+). In terms of biological role, nitrilase that hydrolyzes preferentially 4-cyanopyridine. The polypeptide is Nitrilase (Talaromyces marneffei (strain ATCC 18224 / CBS 334.59 / QM 7333) (Penicillium marneffei)).